Consider the following 306-residue polypeptide: Epoxyqueuosine reductase (306 aa).

The active-site Proton donor is aspartate 131. A 4Fe-4S ferredoxin-type domain is found at 173-205; sequence LDLTYDHPVTDHCGTCTACIDACPTQAIVQPYV. [4Fe-4S] cluster-binding residues include cysteine 185, cysteine 188, cysteine 191, cysteine 195, cysteine 211, cysteine 238, cysteine 241, and cysteine 245.

The protein belongs to the QueG family. Monomer. Requires cob(II)alamin as cofactor. The cofactor is [4Fe-4S] cluster.

The protein localises to the cytoplasm. It catalyses the reaction epoxyqueuosine(34) in tRNA + AH2 = queuosine(34) in tRNA + A + H2O. The protein operates within tRNA modification; tRNA-queuosine biosynthesis. Functionally, catalyzes the conversion of epoxyqueuosine (oQ) to queuosine (Q), which is a hypermodified base found in the wobble positions of tRNA(Asp), tRNA(Asn), tRNA(His) and tRNA(Tyr). This is Epoxyqueuosine reductase from Cellulophaga algicola (strain DSM 14237 / IC166 / ACAM 630).